Here is a 384-residue protein sequence, read N- to C-terminus: Deoxyguanosinetriphosphate triphosphohydrolase-like protein (384 aa).

Residues 62 to 198 (RLTHSLEVST…AALADDISYI (137 aa)) enclose the HD domain.

It belongs to the dGTPase family. Type 2 subfamily.

This is Deoxyguanosinetriphosphate triphosphohydrolase-like protein from Rickettsia peacockii (strain Rustic).